Here is a 370-residue protein sequence, read N- to C-terminus: tRNA (guanine(9)-/adenine(9)-N1)-methyltransferase (370 aa).

The region spanning 87 to 292 (TPEELREKLP…KELPKRATRY (206 aa)) is the SAM-dependent MTase TRM10-type domain.

This sequence belongs to the class IV-like SAM-binding methyltransferase superfamily. TRM10 family.

The protein resides in the cytoplasm. The catalysed reaction is adenosine(9) in tRNA + S-adenosyl-L-methionine = N(1)-methyladenosine(9) in tRNA + S-adenosyl-L-homocysteine + H(+). The enzyme catalyses guanosine(9) in tRNA + S-adenosyl-L-methionine = N(1)-methylguanosine(9) in tRNA + S-adenosyl-L-homocysteine + H(+). Its function is as follows. Catalyzes the S-adenosyl-L-methionine-dependent formation of either N(1)-methyladenine or N(1)-methylguanine at position 9 (m1A9 or m1G9) in tRNA. This Thermococcus kodakarensis (strain ATCC BAA-918 / JCM 12380 / KOD1) (Pyrococcus kodakaraensis (strain KOD1)) protein is tRNA (guanine(9)-/adenine(9)-N1)-methyltransferase.